Here is a 126-residue protein sequence, read N- to C-terminus: Aspartate 1-decarboxylase (126 aa).

Ser25 (schiff-base intermediate with substrate; via pyruvic acid) is an active-site residue. Ser25 bears the Pyruvic acid (Ser) mark. Residue Thr57 coordinates substrate. Tyr58 (proton donor) is an active-site residue. 72–74 (GAA) lines the substrate pocket.

This sequence belongs to the PanD family. In terms of assembly, heterooctamer of four alpha and four beta subunits. It depends on pyruvate as a cofactor. In terms of processing, is synthesized initially as an inactive proenzyme, which is activated by self-cleavage at a specific serine bond to produce a beta-subunit with a hydroxyl group at its C-terminus and an alpha-subunit with a pyruvoyl group at its N-terminus.

The protein resides in the cytoplasm. The enzyme catalyses L-aspartate + H(+) = beta-alanine + CO2. It functions in the pathway cofactor biosynthesis; (R)-pantothenate biosynthesis; beta-alanine from L-aspartate: step 1/1. Its function is as follows. Catalyzes the pyruvoyl-dependent decarboxylation of aspartate to produce beta-alanine. The chain is Aspartate 1-decarboxylase from Campylobacter jejuni subsp. jejuni serotype O:23/36 (strain 81-176).